Reading from the N-terminus, the 29-residue chain is Protein Tat (29 aa).

The interval 1 to 29 (PSSQPRGDPTGQEEPKKKVEKKTTTDPFD) is disordered. A Cell attachment site motif is present at residues 6–8 (RGD). A compositionally biased stretch (basic and acidic residues) spans 13–29 (EEPKKKVEKKTTTDPFD).

This sequence belongs to the lentiviruses Tat family. In terms of assembly, interacts with host CCNT1. Associates with the P-TEFb complex composed at least of Tat, P-TEFb (CDK9 and CCNT1), TAR RNA, RNA Pol II. Recruits the HATs CREBBP, TAF1/TFIID, EP300, PCAF and GCN5L2. Interacts with host KAT5/Tip60; this interaction targets the latter to degradation. Interacts with the host deacetylase SIRT1. Interacts with host capping enzyme RNGTT; this interaction stimulates RNGTT. Binds to host KDR, and to the host integrins ITGAV/ITGB3 and ITGA5/ITGB1. Interacts with host KPNB1/importin beta-1 without previous binding to KPNA1/importin alpha-1. Interacts with EIF2AK2. Interacts with host nucleosome assembly protein NAP1L1; this interaction may be required for the transport of Tat within the nucleus, since the two proteins interact at the nuclear rim. Interacts with host C1QBP/SF2P32; this interaction involves lysine-acetylated Tat. Interacts with the host chemokine receptors CCR2, CCR3 and CXCR4. Interacts with host DPP4/CD26; this interaction may trigger an anti-proliferative effect. Interacts with host LDLR. Interacts with the host extracellular matrix metalloproteinase MMP1. Interacts with host PRMT6; this interaction mediates Tat's methylation. Interacts with, and is ubiquitinated by MDM2/Hdm2. Interacts with host PSMC3 and HTATIP2. Interacts with STAB1; this interaction may overcome SATB1-mediated repression of IL2 and IL2RA (interleukin) in T cells by binding to the same domain than HDAC1. Interacts (when acetylated) with human CDK13, thereby increasing HIV-1 mRNA splicing and promoting the production of the doubly spliced HIV-1 protein Nef. Post-translationally, acetylation by EP300, CREBBP, GCN5L2/GCN5 and PCAF regulates the transactivation activity of Tat. In terms of processing, phosphorylated by EIF2AK2 on serine and threonine residues adjacent to the basic region important for TAR RNA binding and function. Phosphorylation of Tat by EIF2AK2 is dependent on the prior activation of EIF2AK2 by dsRNA. Asymmetrical arginine methylation by host PRMT6 seems to diminish the transactivation capacity of Tat and affects the interaction with host CCNT1. Post-translationally, polyubiquitination by MDM2 does not target Tat to degradation, but activates its transactivation function and fosters interaction with CCNT1 and TAR RNA.

Its subcellular location is the host nucleus. The protein localises to the host nucleolus. It localises to the host cytoplasm. It is found in the secreted. Its function is as follows. Transcriptional activator that increases RNA Pol II processivity, thereby increasing the level of full-length viral transcripts. Recognizes a hairpin structure at the 5'-LTR of the nascent viral mRNAs referred to as the transactivation responsive RNA element (TAR) and recruits the cyclin T1-CDK9 complex (P-TEFb complex) that will in turn hyperphosphorylate the RNA polymerase II to allow efficient elongation. The CDK9 component of P-TEFb and other Tat-activated kinases hyperphosphorylate the C-terminus of RNA Pol II that becomes stabilized and much more processive. Other factors such as HTATSF1/Tat-SF1, SUPT5H/SPT5, and HTATIP2 are also important for Tat's function. Besides its effect on RNA Pol II processivity, Tat induces chromatin remodeling of proviral genes by recruiting the histone acetyltransferases (HATs) CREBBP, EP300 and PCAF to the chromatin. This also contributes to the increase in proviral transcription rate, especially when the provirus integrates in transcriptionally silent region of the host genome. To ensure maximal activation of the LTR, Tat mediates nuclear translocation of NF-kappa-B by interacting with host RELA. Through its interaction with host TBP, Tat may also modulate transcription initiation. Tat can reactivate a latently infected cell by penetrating in it and transactivating its LTR promoter. In the cytoplasm, Tat is thought to act as a translational activator of HIV-1 mRNAs. In terms of biological role, extracellular circulating Tat can be endocytosed by surrounding uninfected cells via the binding to several surface receptors such as CD26, CXCR4, heparan sulfate proteoglycans (HSPG) or LDLR. Neurons are rarely infected, but they internalize Tat via their LDLR. Endosomal low pH allows Tat to cross the endosome membrane to enter the cytosol and eventually further translocate into the nucleus, thereby inducing severe cell dysfunctions ranging from cell activation to cell death. Through its interaction with nuclear HATs, Tat is potentially able to control the acetylation-dependent cellular gene expression. Tat seems to inhibit the HAT activity of KAT5/Tip60 and TAF1, and consequently modify the expression of specific cellular genes. Modulates the expression of many cellular genes involved in cell survival, proliferation or in coding for cytokines (such as IL10) or cytokine receptors. May be involved in the derepression of host interleukin IL2 expression. Mediates the activation of cyclin-dependent kinases and dysregulation of microtubule network. Tat plays a role in T-cell and neurons apoptosis. Tat induced neurotoxicity and apoptosis probably contribute to neuroAIDS. Host extracellular matrix metalloproteinase MMP1 cleaves Tat and decreases Tat's mediated neurotoxicity. Circulating Tat also acts as a chemokine-like and/or growth factor-like molecule that binds to specific receptors on the surface of the cells, affecting many cellular pathways. In the vascular system, Tat binds to ITGAV/ITGB3 and ITGA5/ITGB1 integrins dimers at the surface of endothelial cells and competes with bFGF for heparin-binding sites, leading to an excess of soluble bFGF. Binds to KDR/VEGFR-2. All these Tat-mediated effects enhance angiogenesis in Kaposi's sarcoma lesions. The sequence is that of Protein Tat from Homo sapiens (Human).